We begin with the raw amino-acid sequence, 174 residues long: uncharacterized protein (174 aa).

The interval 1–55 (MGCVVSKSDDIKNENESRQRNQASSSQQPSSSQTPSKQIGIAAKDSEEQPQEVSY) is disordered. G2 is lipidated: N-myristoyl glycine. Residues 7 to 19 (KSDDIKNENESRQ) show a composition bias toward basic and acidic residues. Low complexity predominate over residues 20-38 (RNQASSSQQPSSSQTPSKQ).

This is an uncharacterized protein from Dictyostelium discoideum (Social amoeba).